The following is a 78-amino-acid chain: Protein Class8-like (78 aa).

The N-terminal stretch at Met1–Ala19 is a signal peptide. Positions Phe20 to Arg36 are excised as a propeptide. Residues Cys38–Cys78 form the ShKT domain. 3 disulfides stabilise this stretch: Cys38-Cys78, Cys47-Cys71, and Cys56-Cys75.

As to expression, expressed in ganglion neurons residing in the mesoglea (observed in both planulae and primary polyps). Not expressed in nematocytes.

Its function is as follows. Probable neuropeptide. In Nematostella vectensis (Starlet sea anemone), this protein is Protein Class8-like.